Here is a 293-residue protein sequence, read N- to C-terminus: 4-hydroxy-tetrahydrodipicolinate synthase (293 aa).

A pyruvate-binding site is contributed by T45. The Proton donor/acceptor role is filled by Y133. The active-site Schiff-base intermediate with substrate is K161. A pyruvate-binding site is contributed by I203.

It belongs to the DapA family. In terms of assembly, homotetramer; dimer of dimers.

It localises to the cytoplasm. It catalyses the reaction L-aspartate 4-semialdehyde + pyruvate = (2S,4S)-4-hydroxy-2,3,4,5-tetrahydrodipicolinate + H2O + H(+). It participates in amino-acid biosynthesis; L-lysine biosynthesis via DAP pathway; (S)-tetrahydrodipicolinate from L-aspartate: step 3/4. In terms of biological role, catalyzes the condensation of (S)-aspartate-beta-semialdehyde [(S)-ASA] and pyruvate to 4-hydroxy-tetrahydrodipicolinate (HTPA). This chain is 4-hydroxy-tetrahydrodipicolinate synthase, found in Syntrophotalea carbinolica (strain DSM 2380 / NBRC 103641 / GraBd1) (Pelobacter carbinolicus).